A 388-amino-acid chain; its full sequence is bZIP transcription factor 1-D (388 aa).

Disordered stretches follow at residues 1-49 (MGSS…PIPP), 103-249 (FAPY…GPTT), 261-316 (TASS…RKQA), and 348-388 (ELLS…KDTN). Composition is skewed to low complexity over residues 23 to 33 (PPATSSTATPT) and 117 to 129 (AAGT…TAGG). Residues 169–179 (SGASANGTISQ) are compositionally biased toward polar residues. The segment covering 180-193 (SGESGSESSSEGSE) has biased composition (low complexity). Positions 214–231 (RSSQNGVSPSPSQAQLKQ) are enriched in polar residues. The bZIP domain maps to 293–356 (ELKRQKRKQS…DELLSKNSSL (64 aa)). Residues 295–314 (KRQKRKQSNRDSARRSRLRK) are basic motif. A compositionally biased stretch (basic and acidic residues) spans 302 to 316 (SNRDSARRSRLRKQA). The interval 321 to 356 (LAQRAEVLKQENASLKDEVSRIRKEYDELLSKNSSL) is leucine-zipper. Composition is skewed to basic and acidic residues over residues 359-369 (NVGDKQHKTDE) and 375-388 (KLQH…KDTN).

Belongs to the bZIP family. As to expression, highly expressed in roots and at lower levels in stems and leaves.

It localises to the nucleus. Probable transcription factor that may be involved in responses to fungal pathogen infection and abiotic stresses. This chain is bZIP transcription factor 1-D, found in Triticum aestivum (Wheat).